Consider the following 1343-residue polypeptide: DNA-directed RNA polymerase subunit beta (1343 aa).

It belongs to the RNA polymerase beta chain family. The RNAP catalytic core consists of 2 alpha, 1 beta, 1 beta' and 1 omega subunit. When a sigma factor is associated with the core the holoenzyme is formed, which can initiate transcription.

The catalysed reaction is RNA(n) + a ribonucleoside 5'-triphosphate = RNA(n+1) + diphosphate. Functionally, DNA-dependent RNA polymerase catalyzes the transcription of DNA into RNA using the four ribonucleoside triphosphates as substrates. In Shewanella frigidimarina (strain NCIMB 400), this protein is DNA-directed RNA polymerase subunit beta.